The chain runs to 347 residues: MRIEQDLKLGFKDVLIRPKRSTLKSRSQVDLNRQFTFKHSGKTWSGVPIIAANMDSVASFEMAASLAQHNVMTAVHKHYSVEQWGEFVASQTAEVLQHVMVSSGTSDTDFIKLSEILAKSEDLNFICIDIANGYSEHLVDYVRKVRQAHPQAVISAGNVVTGDMVEELIIAGADIVKVGIGPGSVCTTRVKTGVGYPQLSAIIECADAAHGLGGQIIGDGGCSCAGDVAKAFGGGADFVMLGGMLAGHEQSGGEVVEQDGKMMVKFYGMSSQSAMDKHSGGVAKYRAAEGKTVLLPFKGSVDNTINDIMGGVRSTCTYVGAASLKELTKRTTFIRVQEQENNVYGKE.

Thr-108–Ala-131 contributes to the NADP(+) binding site. 2 residues coordinate K(+): Gly-181 and Gly-183. The Thioimidate intermediate role is filled by Cys-186. Ile-216–Val-239 is a binding site for NADP(+).

The protein belongs to the IMPDH/GMPR family. GuaC type 1 subfamily. Homotetramer.

It catalyses the reaction IMP + NH4(+) + NADP(+) = GMP + NADPH + 2 H(+). Functionally, catalyzes the irreversible NADPH-dependent deamination of GMP to IMP. It functions in the conversion of nucleobase, nucleoside and nucleotide derivatives of G to A nucleotides, and in maintaining the intracellular balance of A and G nucleotides. This chain is GMP reductase, found in Shewanella pealeana (strain ATCC 700345 / ANG-SQ1).